Reading from the N-terminus, the 149-residue chain is MSLVRRSNVFDPFADFWDPFDGVFRSLVPATSDRDTAAFANARVDWKETPESHVFKADLPGVKKEEVKVEVEEGNVLVISGQRSKEKEDKNDKWHRVERSSGQFMRRFRLPENAKVDQVKASMENGVLTVTVPKAEVKKPEVKAIEISG.

The 115-residue stretch at 35-149 (DTAAFANARV…PEVKAIEISG (115 aa)) folds into the sHSP domain.

Belongs to the small heat shock protein (HSP20) family. In terms of assembly, may form oligomeric structures.

It is found in the cytoplasm. This is 16.9 kDa class I heat shock protein 3 (HSP16.9C) from Oryza sativa subsp. japonica (Rice).